Here is a 1440-residue protein sequence, read N- to C-terminus: Genome polyprotein (1440 aa).

The propeptide at 32–53 is ER anchor for the capsid protein C, removed in mature form by serine protease NS3; sequence GGNEGSIMWLASLAVVIACAGA. The chain crosses the membrane as a helical span at residues 36-56; the sequence is GSIMWLASLAVVIACAGAMKL. Over 57-180 the chain is Extracellular; that stretch reads SNFQGKLLMT…ATRYLMKTEN (124 aa). Asn68 carries N-linked (GlcNAc...) asparagine; by host glycosylation. Residues 181–201 form a helical membrane-spanning segment; the sequence is WIVRNPGYAFLAAILGWMLGS. The Cytoplasmic portion of the chain corresponds to 202 to 207; sequence NNGQRR. A helical transmembrane segment spans residues 208 to 222; the sequence is WYFTILLLLVAPAYS. At 223–674 the chain is on the extracellular side; sequence FNCLGMGNRD…QVFGGAFRTL (452 aa). 6 disulfides stabilise this stretch: Cys225/Cys252, Cys282/Cys338, Cys282/Cys343, Cys296/Cys327, Cys314/Cys338, and Cys314/Cys343. Residues 320 to 333 are fusion peptide; the sequence is DRGWGNGCGLFGKG. Residue Asn376 is glycosylated (N-linked (GlcNAc...) asparagine; by host). 2 disulfide bridges follow: Cys412–Cys509 and Cys526–Cys557. The chain crosses the membrane as a helical span at residues 675–695; the sequence is FGGMSWITQGLMGALLLWMGV. Topologically, residues 696–701 are cytoplasmic; it reads NARDRS. A helical transmembrane segment spans residues 702 to 722; the sequence is IALAFLATGGVLVFLATNVHA. Topologically, residues 723-1147 are extracellular; the sequence is DTGCAIDITR…AFAEANSGGD (425 aa). 6 disulfide bridges follow: Cys726–Cys737, Cys777–Cys865, Cys901–Cys945, Cys1002–Cys1051, Cys1013–Cys1034, and Cys1035–Cys1038. N-linked (GlcNAc...) asparagine; by host glycans are attached at residues Asn852 and Asn929. The chain crosses the membrane as a helical span at residues 1148 to 1168; the sequence is VLHLALIAVFKIQPAFLVMNM. Residues 1169-1178 lie on the Cytoplasmic side of the membrane; sequence LSTRWTNQEN. A helical transmembrane segment spans residues 1179–1199; that stretch reads VVLVLGAAFFHLASVDLQIGV. A topological domain (lumenal) is located at residue His1200. The chain crosses the membrane as a helical span at residues 1201–1221; that stretch reads GILNAAAIAWMIVRAITFPTT. The Cytoplasmic segment spans residues 1222 to 1237; the sequence is SSVTMPVLALLTPGMR. The helical transmembrane segment at 1238–1258 threads the bilayer; that stretch reads ALYLDTYRIILLVIGICSLLQ. The Lumenal portion of the chain corresponds to 1259–1269; it reads ERKKTMAKKKG. A helical transmembrane segment spans residues 1270–1290; the sequence is AVLLGLALTSTGWFSPTTIAA. Residues 1291–1302 lie on the Cytoplasmic side of the membrane; the sequence is GLMVCNPNKKRG. Residues 1303–1323 traverse the membrane as a helical segment; that stretch reads WPATEFLSAVGLMFAIVGGLA. At 1324–1326 the chain is on the lumenal side; sequence ELD. Residues 1327–1347 form a helical membrane-spanning segment; it reads IESMSIPFMLAGLMAVSYVVS. The Cytoplasmic portion of the chain corresponds to 1348–1404; that stretch reads GKATDMWLERAADISWEMDAAITGSSRRLDVKLDDDGDFHLIDDPGVPWKVWVLRMS. Residues 1355-1394 are interacts with and activates NS3 protease; that stretch reads LERAADISWEMDAAITGSSRRLDVKLDDDGDFHLIDDPGV. An intramembrane region (helical) is located at residues 1405–1425; the sequence is CIGLAALTPWAIVPAAFGYWL. The Cytoplasmic segment spans residues 1426–1440; that stretch reads TLKTTKRGGVFWDTP.

In terms of assembly, homodimer. Interacts (via N-terminus) with host EXOC1 (via C-terminus); this interaction results in EXOC1 degradation through the proteasome degradation pathway. As to quaternary structure, forms heterodimers with envelope protein E in the endoplasmic reticulum and Golgi. Homodimer; in the endoplasmic reticulum and Golgi. Interacts with protein prM. Interacts with non-structural protein 1. In terms of assembly, homodimer; Homohexamer when secreted. Interacts with envelope protein E. NS1 interacts with NS4B. Interacts with host complement protein CFH; this interaction leads to the degradation of C3. As to quaternary structure, interacts (via N-terminus) with serine protease NS3. Forms a heterodimer with serine protease NS3. May form homooligomers. In terms of assembly, forms a heterodimer with NS2B. Interacts with non-structural protein 2A (via N-terminus). Interacts with NS4B. Interacts with unphosphorylated RNA-directed RNA polymerase NS5; this interaction stimulates RNA-directed RNA polymerase NS5 guanylyltransferase activity. Mn(2+) is required as a cofactor. It depends on Mg(2+) as a cofactor. Specific enzymatic cleavages in vivo yield mature proteins. Cleavages in the lumen of endoplasmic reticulum are performed by host signal peptidase, whereas cleavages in the cytoplasmic side are performed by serine protease NS3. Signal cleavage at the 2K-4B site requires a prior NS3 protease-mediated cleavage at the 4A-2K site. In terms of processing, cleaved in post-Golgi vesicles by a host furin, releasing the mature small envelope protein M, and peptide pr. This cleavage is incomplete as up to 30% of viral particles still carry uncleaved prM. Post-translationally, N-glycosylated. N-glycosylated. The excreted form is glycosylated and this is required for efficient secretion of the protein from infected cells. In terms of processing, RNA-directed RNA polymerase NS5: Phosphorylated on serines residues. This phosphorylation may trigger NS5 nuclear localization.

Its subcellular location is the virion. The protein localises to the host nucleus. The protein resides in the host cytoplasm. It localises to the host perinuclear region. It is found in the secreted. Its subcellular location is the virion membrane. The protein localises to the host endoplasmic reticulum membrane. The enzyme catalyses Selective hydrolysis of -Xaa-Xaa-|-Yaa- bonds in which each of the Xaa can be either Arg or Lys and Yaa can be either Ser or Ala.. The catalysed reaction is a ribonucleoside 5'-triphosphate + H2O = a ribonucleoside 5'-diphosphate + phosphate + H(+). It catalyses the reaction ATP + H2O = ADP + phosphate + H(+). In terms of biological role, plays a role in virus budding by binding to the cell membrane and gathering the viral RNA into a nucleocapsid that forms the core of a mature virus particle. During virus entry, may induce genome penetration into the host cytoplasm after hemifusion induced by the surface proteins. Can migrate to the cell nucleus where it modulates host functions. Overcomes the anti-viral effects of host EXOC1 by sequestering and degrading the latter through the proteasome degradation pathway. Inhibits RNA silencing by interfering with host Dicer. Its function is as follows. Prevents premature fusion activity of envelope proteins in trans-Golgi by binding to envelope protein E at pH 6.0. After virion release in extracellular space, gets dissociated from E dimers. Functionally, acts as a chaperone for envelope protein E during intracellular virion assembly by masking and inactivating envelope protein E fusion peptide. prM is the only viral peptide matured by host furin in the trans-Golgi network probably to avoid catastrophic activation of the viral fusion activity in acidic Golgi compartment prior to virion release. prM-E cleavage is inefficient, and many virions are only partially matured. These uncleaved prM would play a role in immune evasion. In terms of biological role, may play a role in virus budding. Exerts cytotoxic effects by activating a mitochondrial apoptotic pathway through M ectodomain. May display a viroporin activity. Binds to host cell surface receptor and mediates fusion between viral and cellular membranes. Envelope protein is synthesized in the endoplasmic reticulum in the form of heterodimer with protein prM. They play a role in virion budding in the ER, and the newly formed immature particle is covered with 60 spikes composed of heterodimer between precursor prM and envelope protein E. The virion is transported to the Golgi apparatus where the low pH causes dissociation of PrM-E heterodimers and formation of E homodimers. prM-E cleavage is inefficient, and many virions are only partially matured. These uncleaved prM would play a role in immune evasion. Its function is as follows. Involved in immune evasion, pathogenesis and viral replication. Once cleaved off the polyprotein, is targeted to three destinations: the viral replication cycle, the plasma membrane and the extracellular compartment. Essential for viral replication. Required for formation of the replication complex and recruitment of other non-structural proteins to the ER-derived membrane structures. Excreted as a hexameric lipoparticle that plays a role against host immune response. Antagonizing the complement function. Binds to the host macrophages and dendritic cells. Inhibits signal transduction originating from Toll-like receptor 3 (TLR3). Functionally, component of the viral RNA replication complex that functions in virion assembly and antagonizes the host alpha/beta interferon antiviral response. In terms of biological role, required cofactor for the serine protease function of NS3. May have membrane-destabilizing activity and form viroporins. Displays three enzymatic activities: serine protease, NTPase and RNA helicase. NS3 serine protease, in association with NS2B, performs its autocleavage and cleaves the polyprotein at dibasic sites in the cytoplasm: C-prM, NS2A-NS2B, NS2B-NS3, NS3-NS4A, NS4A-2K and NS4B-NS5. NS3 RNA helicase binds RNA and unwinds dsRNA in the 3' to 5' direction. Its function is as follows. Non-structural protein 4A: Regulates the ATPase activity of the NS3 helicase activity. NS4A allows NS3 helicase to conserve energy during unwinding. Functionally, peptide 2k: Functions as a signal peptide for NS4B and is required for the interferon antagonism activity of the latter. In terms of biological role, non-structural protein 4B: Induces the formation of ER-derived membrane vesicles where the viral replication takes place. Inhibits interferon (IFN)-induced host STAT1 phosphorylation and nuclear translocation, thereby preventing the establishment of cellular antiviral state by blocking the IFN-alpha/beta pathway. Inhibits STAT2 translocation in the nucleus after IFN-alpha treatment. RNA-directed RNA polymerase NS5: Replicates the viral (+) and (-) RNA genome. Performs the capping of genomes in the cytoplasm. NS5 methylates viral RNA cap at guanine N-7 and ribose 2'-O positions. Besides its role in RNA genome replication, also prevents the establishment of cellular antiviral state by blocking the interferon-alpha/beta (IFN-alpha/beta) signaling pathway. Inhibits host TYK2 and STAT2 phosphorylation, thereby preventing activation of JAK-STAT signaling pathway. The protein is Genome polyprotein of Japanese encephalitis virus (strain Nakayama) (JEV).